A 193-amino-acid polypeptide reads, in one-letter code: UPF0301 protein Fphi_1754 (193 aa).

It belongs to the UPF0301 (AlgH) family.

The polypeptide is UPF0301 protein Fphi_1754 (Francisella philomiragia subsp. philomiragia (strain ATCC 25017 / CCUG 19701 / FSC 153 / O#319-036)).